The primary structure comprises 416 residues: MSKADLIVGLQWGDEGKGKIVDHMAQTHDYVCRFAGGHNAGHTIVIGDKTYALHLIPSGVLNPKAKNVVGNGVVLSPKDFIKEMEQFDNLEGRLFLSDKAHILLPYHADIDQARERMKGDKAIGTTGKGIGPAYGDKVARVGHRLGELLHPEKLASKIIAFFEMNKPVFDAMGVEMPETVALLEELEGYRKVLAPYICDTTQLMWKIIDEDKRILLEGAQGTMLDIDHGTYPYVTSSTTVSAGACSGLGLNPKDIGKVTGIAKAYCTRVGNGPFPSEDMGKEGDRLRENGHEFGTTTGRPRRCGWFDAVAMRHAVRVNGVDQVALMKLDVLDGFDEIKVCVAYEFEGKEIDYVPYDLEDVKPIYKSFPGWEKTEGAREFDALPETAKSYILALEEMIGTKMGIISTSPEREDTIIR.

GTP contacts are provided by residues 13–19 (GDEGKGK) and 41–43 (GHT). Asp-14 acts as the Proton acceptor in catalysis. Mg(2+) contacts are provided by Asp-14 and Gly-41. Residues 14 to 17 (DEGK), 39 to 42 (NAGH), Thr-126, Arg-140, Gln-220, Thr-235, and Arg-299 each bind IMP. The active-site Proton donor is the His-42. 295–301 (TTTGRPR) contributes to the substrate binding site. GTP is bound by residues Arg-301, 327 to 329 (KLD), and 405 to 407 (STS).

It belongs to the adenylosuccinate synthetase family. In terms of assembly, homodimer. Requires Mg(2+) as cofactor.

The protein resides in the cytoplasm. It catalyses the reaction IMP + L-aspartate + GTP = N(6)-(1,2-dicarboxyethyl)-AMP + GDP + phosphate + 2 H(+). The protein operates within purine metabolism; AMP biosynthesis via de novo pathway; AMP from IMP: step 1/2. Functionally, plays an important role in the de novo pathway of purine nucleotide biosynthesis. Catalyzes the first committed step in the biosynthesis of AMP from IMP. This chain is Adenylosuccinate synthetase, found in Sulfurovum sp. (strain NBC37-1).